A 261-amino-acid chain; its full sequence is Cytochrome c oxidase subunit 3 (261 aa).

The Mitochondrial matrix segment spans residues 1–15 (MAHQAHSYHMVDPSP). A helical membrane pass occupies residues 16-34 (WPIFGAAAALLTTSGLIMW). Topologically, residues 35–40 (FHYSST) are mitochondrial intermembrane. The chain crosses the membrane as a helical span at residues 41 to 66 (TLLTMGLLSMLLVMLQWWRDVVREST). The Mitochondrial matrix portion of the chain corresponds to 67 to 72 (FQGHHT). A helical membrane pass occupies residues 73-105 (PTVQKGLRYGMILFITSEAFFFLGFFWAFFHSS). At 106–128 (LAPTPELGGQWPPTGVKPLNPLE) the chain is on the mitochondrial intermembrane side. A helical membrane pass occupies residues 129–152 (VPLLNTAILLASGVTVTWAHHSIT). Residues 153 to 155 (EGN) lie on the Mitochondrial matrix side of the membrane. Residues 156–183 (RKQAIHALTLTILLGFYFTALQAMEYHE) form a helical membrane-spanning segment. The Mitochondrial intermembrane segment spans residues 184–190 (ASFSIAD). The helical transmembrane segment at 191–223 (SVYGSTFFVATGFHGLHVIIGSSFLTVCLLRLI) threads the bilayer. Residues 224–232 (KFHFTPNHH) are Mitochondrial matrix-facing. Residues 233–256 (FGFEAAAWYWHFVDIIWLFLYMSM) traverse the membrane as a helical segment. The Mitochondrial intermembrane segment spans residues 257–261 (YWWGS).

It belongs to the cytochrome c oxidase subunit 3 family. In terms of assembly, component of the cytochrome c oxidase (complex IV, CIV), a multisubunit enzyme composed of 14 subunits. The complex is composed of a catalytic core of 3 subunits MT-CO1, MT-CO2 and MT-CO3, encoded in the mitochondrial DNA, and 11 supernumerary subunits COX4I, COX5A, COX5B, COX6A, COX6B, COX6C, COX7A, COX7B, COX7C, COX8 and NDUFA4, which are encoded in the nuclear genome. The complex exists as a monomer or a dimer and forms supercomplexes (SCs) in the inner mitochondrial membrane with NADH-ubiquinone oxidoreductase (complex I, CI) and ubiquinol-cytochrome c oxidoreductase (cytochrome b-c1 complex, complex III, CIII), resulting in different assemblies (supercomplex SCI(1)III(2)IV(1) and megacomplex MCI(2)III(2)IV(2)).

It is found in the mitochondrion inner membrane. The catalysed reaction is 4 Fe(II)-[cytochrome c] + O2 + 8 H(+)(in) = 4 Fe(III)-[cytochrome c] + 2 H2O + 4 H(+)(out). Its function is as follows. Component of the cytochrome c oxidase, the last enzyme in the mitochondrial electron transport chain which drives oxidative phosphorylation. The respiratory chain contains 3 multisubunit complexes succinate dehydrogenase (complex II, CII), ubiquinol-cytochrome c oxidoreductase (cytochrome b-c1 complex, complex III, CIII) and cytochrome c oxidase (complex IV, CIV), that cooperate to transfer electrons derived from NADH and succinate to molecular oxygen, creating an electrochemical gradient over the inner membrane that drives transmembrane transport and the ATP synthase. Cytochrome c oxidase is the component of the respiratory chain that catalyzes the reduction of oxygen to water. Electrons originating from reduced cytochrome c in the intermembrane space (IMS) are transferred via the dinuclear copper A center (CU(A)) of subunit 2 and heme A of subunit 1 to the active site in subunit 1, a binuclear center (BNC) formed by heme A3 and copper B (CU(B)). The BNC reduces molecular oxygen to 2 water molecules using 4 electrons from cytochrome c in the IMS and 4 protons from the mitochondrial matrix. The chain is Cytochrome c oxidase subunit 3 (MT-CO3) from Gallus gallus (Chicken).